Here is a 210-residue protein sequence, read N- to C-terminus: Probable GTP-binding protein EngB (210 aa).

Positions 25–199 (TGIEVAFAGR…RQKLDTWFSE (175 aa)) constitute an EngB-type G domain. GTP is bound by residues 33 to 40 (GRSNAGKS), 60 to 64 (GRTQL), 78 to 81 (DLPG), 145 to 148 (TKTD), and 178 to 180 (FSS). Residues S40 and T62 each coordinate Mg(2+).

It belongs to the TRAFAC class TrmE-Era-EngA-EngB-Septin-like GTPase superfamily. EngB GTPase family. Mg(2+) is required as a cofactor.

In terms of biological role, necessary for normal cell division and for the maintenance of normal septation. This Escherichia coli O6:K15:H31 (strain 536 / UPEC) protein is Probable GTP-binding protein EngB.